A 183-amino-acid chain; its full sequence is ATP synthase subunit b, chloroplastic (183 aa).

The chain crosses the membrane as a helical span at residues 28–48; it reads DIFEANVINILLLLFGLIYVL.

This sequence belongs to the ATPase B chain family. In terms of assembly, F-type ATPases have 2 components, F(1) - the catalytic core - and F(0) - the membrane proton channel. F(1) has five subunits: alpha(3), beta(3), gamma(1), delta(1), epsilon(1). F(0) has four main subunits: a(1), b(1), b'(1) and c(10-14). The alpha and beta chains form an alternating ring which encloses part of the gamma chain. F(1) is attached to F(0) by a central stalk formed by the gamma and epsilon chains, while a peripheral stalk is formed by the delta, b and b' chains.

The protein localises to the plastid. It localises to the chloroplast thylakoid membrane. In terms of biological role, f(1)F(0) ATP synthase produces ATP from ADP in the presence of a proton or sodium gradient. F-type ATPases consist of two structural domains, F(1) containing the extramembraneous catalytic core and F(0) containing the membrane proton channel, linked together by a central stalk and a peripheral stalk. During catalysis, ATP synthesis in the catalytic domain of F(1) is coupled via a rotary mechanism of the central stalk subunits to proton translocation. Component of the F(0) channel, it forms part of the peripheral stalk, linking F(1) to F(0). The sequence is that of ATP synthase subunit b, chloroplastic from Porphyra purpurea (Red seaweed).